Here is a 310-residue protein sequence, read N- to C-terminus: Probable plastid-lipid-associated protein 2, chloroplastic (310 aa).

Residues 1 to 59 (MATVQLSTQFSCQTRVSISPNSKSISKPPFLVPVTSIIHRPMISTGGIAVSPRRVFKVR) constitute a chloroplast transit peptide. Thr-61 carries the post-translational modification Phosphothreonine. Positions 65 to 94 (EIGSALLAAEEAIEDVEETERLKRSLVDSL) form a coiled coil.

The protein belongs to the PAP/fibrillin family.

It is found in the plastid. It localises to the chloroplast. The protein localises to the plastoglobule. Probably involved in light/cold stress-related jasmonate (JA) biosynthesis. The polypeptide is Probable plastid-lipid-associated protein 2, chloroplastic (PAP2) (Arabidopsis thaliana (Mouse-ear cress)).